Consider the following 274-residue polypeptide: Diaminopimelate epimerase (274 aa).

Asn11, Gln44, and Asn64 together coordinate substrate. The active-site Proton donor is Cys73. Substrate contacts are provided by residues 74–75 (GN), Asn157, Asn190, and 208–209 (ER). The active-site Proton acceptor is Cys217. 218–219 (GT) contacts substrate.

It belongs to the diaminopimelate epimerase family. As to quaternary structure, homodimer.

Its subcellular location is the cytoplasm. The catalysed reaction is (2S,6S)-2,6-diaminopimelate = meso-2,6-diaminopimelate. It participates in amino-acid biosynthesis; L-lysine biosynthesis via DAP pathway; DL-2,6-diaminopimelate from LL-2,6-diaminopimelate: step 1/1. In terms of biological role, catalyzes the stereoinversion of LL-2,6-diaminopimelate (L,L-DAP) to meso-diaminopimelate (meso-DAP), a precursor of L-lysine and an essential component of the bacterial peptidoglycan. The protein is Diaminopimelate epimerase of Blochmanniella pennsylvanica (strain BPEN).